Reading from the N-terminus, the 191-residue chain is Fe/S biogenesis protein NfuA (191 aa).

2 residues coordinate [4Fe-4S] cluster: C149 and C152.

This sequence belongs to the NfuA family. In terms of assembly, homodimer. It depends on [4Fe-4S] cluster as a cofactor.

In terms of biological role, involved in iron-sulfur cluster biogenesis. Binds a 4Fe-4S cluster, can transfer this cluster to apoproteins, and thereby intervenes in the maturation of Fe/S proteins. Could also act as a scaffold/chaperone for damaged Fe/S proteins. This Escherichia coli O7:K1 (strain IAI39 / ExPEC) protein is Fe/S biogenesis protein NfuA.